The following is a 162-amino-acid chain: Transcription elongation factor GreA (162 aa).

A coiled-coil region spans residues 45–74; the sequence is ENAEYEAAREKQAFIEGRIKELEDMTARAE.

Belongs to the GreA/GreB family.

Functionally, necessary for efficient RNA polymerase transcription elongation past template-encoded arresting sites. The arresting sites in DNA have the property of trapping a certain fraction of elongating RNA polymerases that pass through, resulting in locked ternary complexes. Cleavage of the nascent transcript by cleavage factors such as GreA or GreB allows the resumption of elongation from the new 3'terminus. GreA releases sequences of 2 to 3 nucleotides. The chain is Transcription elongation factor GreA from Rickettsia felis (strain ATCC VR-1525 / URRWXCal2) (Rickettsia azadi).